Reading from the N-terminus, the 231-residue chain is NADH-ubiquinone oxidoreductase chain 4 (231 aa).

6 consecutive transmembrane segments (helical) span residues 1-21, 34-54, 63-85, 89-111, 128-148, and 156-176; these read PIAG…YGII, MFLP…LTCL, IAYS…TPWG, AMAL…NTTY, ILPM…ATPP, and LLIM…LGLS.

It belongs to the complex I subunit 4 family.

The protein localises to the mitochondrion membrane. It carries out the reaction a ubiquinone + NADH + 5 H(+)(in) = a ubiquinol + NAD(+) + 4 H(+)(out). In terms of biological role, core subunit of the mitochondrial membrane respiratory chain NADH dehydrogenase (Complex I) that is believed to belong to the minimal assembly required for catalysis. Complex I functions in the transfer of electrons from NADH to the respiratory chain. The immediate electron acceptor for the enzyme is believed to be ubiquinone. This is NADH-ubiquinone oxidoreductase chain 4 (MT-ND4) from Bothriechis lateralis (Side-striped palm pitviper).